The following is a 542-amino-acid chain: CTP synthase (542 aa).

The amidoligase domain stretch occupies residues 1–265; it reads MARYVFITGG…DSEVLSAFGI (265 aa). S13 serves as a coordination point for CTP. A UTP-binding site is contributed by S13. 14–19 contacts ATP; it reads SLGKGI. L-glutamine is bound at residue Y54. D71 is an ATP binding site. Residues D71 and E139 each contribute to the Mg(2+) site. CTP-binding positions include 146–148, 186–191, and K222; these read DIE and KTKPTQ. Residues 186 to 191 and K222 each bind UTP; that span reads KTKPTQ. The 251-residue stretch at 291–541 folds into the Glutamine amidotransferase type-1 domain; the sequence is TIAVVGKYTG…IEAAIEQSRL (251 aa). G353 contacts L-glutamine. The active-site Nucleophile; for glutamine hydrolysis is the C380. Residues 381 to 384, E404, and R469 contribute to the L-glutamine site; that span reads FGMQ. Catalysis depends on residues H514 and E516.

It belongs to the CTP synthase family. In terms of assembly, homotetramer.

It catalyses the reaction UTP + L-glutamine + ATP + H2O = CTP + L-glutamate + ADP + phosphate + 2 H(+). The catalysed reaction is L-glutamine + H2O = L-glutamate + NH4(+). It carries out the reaction UTP + NH4(+) + ATP = CTP + ADP + phosphate + 2 H(+). Its pathway is pyrimidine metabolism; CTP biosynthesis via de novo pathway; CTP from UDP: step 2/2. With respect to regulation, allosterically activated by GTP, when glutamine is the substrate; GTP has no effect on the reaction when ammonia is the substrate. The allosteric effector GTP functions by stabilizing the protein conformation that binds the tetrahedral intermediate(s) formed during glutamine hydrolysis. Inhibited by the product CTP, via allosteric rather than competitive inhibition. Its function is as follows. Catalyzes the ATP-dependent amination of UTP to CTP with either L-glutamine or ammonia as the source of nitrogen. Regulates intracellular CTP levels through interactions with the four ribonucleotide triphosphates. This is CTP synthase from Brucella canis (strain ATCC 23365 / NCTC 10854 / RM-666).